The chain runs to 358 residues: Tetraacyldisaccharide 4'-kinase (358 aa).

Residue 71 to 78 (IAGGAGKT) participates in ATP binding.

Belongs to the LpxK family.

The enzyme catalyses a lipid A disaccharide + ATP = a lipid IVA + ADP + H(+). Its pathway is glycolipid biosynthesis; lipid IV(A) biosynthesis; lipid IV(A) from (3R)-3-hydroxytetradecanoyl-[acyl-carrier-protein] and UDP-N-acetyl-alpha-D-glucosamine: step 6/6. Functionally, transfers the gamma-phosphate of ATP to the 4'-position of a tetraacyldisaccharide 1-phosphate intermediate (termed DS-1-P) to form tetraacyldisaccharide 1,4'-bis-phosphate (lipid IVA). This Methylibium petroleiphilum (strain ATCC BAA-1232 / LMG 22953 / PM1) protein is Tetraacyldisaccharide 4'-kinase.